Reading from the N-terminus, the 114-residue chain is Large ribosomal subunit protein uL22 (114 aa).

It belongs to the universal ribosomal protein uL22 family. In terms of assembly, part of the 50S ribosomal subunit.

Functionally, this protein binds specifically to 23S rRNA; its binding is stimulated by other ribosomal proteins, e.g. L4, L17, and L20. It is important during the early stages of 50S assembly. It makes multiple contacts with different domains of the 23S rRNA in the assembled 50S subunit and ribosome. In terms of biological role, the globular domain of the protein is located near the polypeptide exit tunnel on the outside of the subunit, while an extended beta-hairpin is found that lines the wall of the exit tunnel in the center of the 70S ribosome. This is Large ribosomal subunit protein uL22 from Streptococcus pyogenes serotype M5 (strain Manfredo).